A 192-amino-acid polypeptide reads, in one-letter code: dCTP deaminase, dUMP-forming (192 aa).

DCTP-binding positions include K101–R106, D119, T127–E129, Q148, Y162, and Q174. Residue E129 is the Proton donor/acceptor of the active site. The segment at Y171–R192 is disordered.

It belongs to the dCTP deaminase family. As to quaternary structure, homotrimer.

It catalyses the reaction dCTP + 2 H2O = dUMP + NH4(+) + diphosphate. The protein operates within pyrimidine metabolism; dUMP biosynthesis; dUMP from dCTP: step 1/1. Its function is as follows. Bifunctional enzyme that catalyzes both the deamination of dCTP to dUTP and the hydrolysis of dUTP to dUMP without releasing the toxic dUTP intermediate. The protein is dCTP deaminase, dUMP-forming of Salinispora arenicola (strain CNS-205).